The sequence spans 714 residues: Polyribonucleotide nucleotidyltransferase (714 aa).

Mg(2+)-binding residues include D486 and D492. The 60-residue stretch at 553–612 folds into the KH domain; that stretch reads PRIITMKINPEKIRDVIGKGGAVIRALTEETGTTIDIEEDGTIKIGCTSAEAGEEAKKRI. One can recognise an S1 motif domain in the interval 622-690; sequence GQVYDGTVLK…DKGRVRLSAK (69 aa).

The protein belongs to the polyribonucleotide nucleotidyltransferase family. Mg(2+) serves as cofactor.

Its subcellular location is the cytoplasm. The catalysed reaction is RNA(n+1) + phosphate = RNA(n) + a ribonucleoside 5'-diphosphate. Involved in mRNA degradation. Catalyzes the phosphorolysis of single-stranded polyribonucleotides processively in the 3'- to 5'-direction. This chain is Polyribonucleotide nucleotidyltransferase, found in Methylobacillus flagellatus (strain ATCC 51484 / DSM 6875 / VKM B-1610 / KT).